A 208-amino-acid polypeptide reads, in one-letter code: Mediator of RNA polymerase II transcription subunit 18 (208 aa).

This sequence belongs to the Mediator complex subunit 18 family. As to quaternary structure, component of the Mediator complex.

It localises to the nucleus. Component of the Mediator complex, a coactivator involved in the regulated transcription of nearly all RNA polymerase II-dependent genes. Mediator functions as a bridge to convey information from gene-specific regulatory proteins to the basal RNA polymerase II transcription machinery. Mediator is recruited to promoters by direct interactions with regulatory proteins and serves as a scaffold for the assembly of a functional preinitiation complex with RNA polymerase II and the general transcription factors. This chain is Mediator of RNA polymerase II transcription subunit 18 (med18), found in Xenopus laevis (African clawed frog).